Consider the following 297-residue polypeptide: HTH-type transcriptional regulator ArgP (297 aa).

Positions 4–60 (PDYRTLQALDAVIRERGFERAAQKLCITQSAVSQRIKQLENMFGQPLLVRTVPPRPT) constitute an HTH lysR-type domain. The H-T-H motif DNA-binding region spans 21–40 (FERAAQKLCITQSAVSQRIK).

The protein belongs to the LysR transcriptional regulatory family. In terms of assembly, homodimer.

Controls the transcription of genes involved in arginine and lysine metabolism. This is HTH-type transcriptional regulator ArgP from Citrobacter koseri (strain ATCC BAA-895 / CDC 4225-83 / SGSC4696).